Reading from the N-terminus, the 202-residue chain is Hypoxanthine-guanine phosphoribosyltransferase (202 aa).

The diphosphate site is built by K66 and G67. Residues E122 and D123 each coordinate Mg(2+). D126 acts as the Proton acceptor in catalysis. GMP-binding positions include K154, F175–V176, and D182. Diphosphate is bound at residue R188.

This sequence belongs to the purine/pyrimidine phosphoribosyltransferase family. Requires Mg(2+) as cofactor.

It localises to the cytoplasm. It carries out the reaction IMP + diphosphate = hypoxanthine + 5-phospho-alpha-D-ribose 1-diphosphate. The catalysed reaction is GMP + diphosphate = guanine + 5-phospho-alpha-D-ribose 1-diphosphate. Its pathway is purine metabolism; IMP biosynthesis via salvage pathway; IMP from hypoxanthine: step 1/1. It participates in purine metabolism; GMP biosynthesis via salvage pathway; GMP from guanine: step 1/1. Its function is as follows. Purine salvage pathway enzyme that catalyzes the transfer of the ribosyl-5-phosphate group from 5-phospho-alpha-D-ribose 1-diphosphate (PRPP) to the N9 position of the 6-oxopurines hypoxanthine and guanine to form the corresponding ribonucleotides IMP (inosine 5'-monophosphate) and GMP (guanosine 5'-monophosphate), with the release of PPi. This chain is Hypoxanthine-guanine phosphoribosyltransferase (hpt), found in Mycobacterium tuberculosis (strain CDC 1551 / Oshkosh).